The chain runs to 501 residues: ATP-dependent rRNA helicase RRP3 (501 aa).

A coiled-coil region spans residues 3-44; that stretch reads KIVKRKEKKANDELTSLAEKIRAKALENQKKLIEAEKEGGSE. The interval 36–79 is disordered; the sequence is EAEKEGGSESDSEEDATAEKKKVLKSKSKSTVSTQNENTNEDES. Phosphoserine is present on residues Ser-43, Ser-45, and Ser-47. The Q motif signature appears at 81–109; it reads ESFSELNLVPELIQACKNLNYSKPTPIQS. Positions 112–284 constitute a Helicase ATP-binding domain; sequence IPPALEGHDI…RASLTNPVKC (173 aa). 125 to 132 is an ATP binding site; it reads AQTGSGKT. The DEAD box motif lies at 231–234; the sequence is DEAD. In terms of domain architecture, Helicase C-terminal spans 307–461; the sequence is LKNTYLIYLL…NIILTLRDSV (155 aa). The segment at 480–501 is disordered; the sequence is IARGKGRRGRMMTRENMDMGER. Over residues 491–501 the composition is skewed to basic and acidic residues; it reads MTRENMDMGER.

It belongs to the DEAD box helicase family. DDX47/RRP3 subfamily. In terms of assembly, interacts with the SSU processome.

It localises to the nucleus. It carries out the reaction ATP + H2O = ADP + phosphate + H(+). With respect to regulation, ATPase activity is stimulated upon the addition of RNA. In terms of biological role, ATP-dependent rRNA helicase required for pre-ribosomal RNA processing. Involved in the maturation of the 35S-pre-rRNA and to its cleavage to mature 18S rRNA. This is ATP-dependent rRNA helicase RRP3 from Saccharomyces cerevisiae (strain ATCC 204508 / S288c) (Baker's yeast).